The chain runs to 337 residues: Heat-inducible transcription repressor HrcA (337 aa).

Belongs to the HrcA family.

Functionally, negative regulator of class I heat shock genes (grpE-dnaK-dnaJ and groELS operons). Prevents heat-shock induction of these operons. The protein is Heat-inducible transcription repressor HrcA of Metamycoplasma arthritidis (strain 158L3-1) (Mycoplasma arthritidis).